The sequence spans 478 residues: Hemolysin secretion protein D, chromosomal (478 aa).

Residues 1–59 are Cytoplasmic-facing; sequence MKTWLMGFSEFLLRYKLVWSETWKIRKQLDTPVREKDENEFLPAHLELIETPVSRRPRL. A helical; Signal-anchor for type II membrane protein membrane pass occupies residues 60–80; sequence VAYFIMGFLVIAFILSVLGQV. At 81–478 the chain is on the periplasmic side; sequence EIVATANGKL…ESVTESLHER (398 aa).

The protein belongs to the membrane fusion protein (MFP) (TC 8.A.1) family.

It is found in the cell inner membrane. Its function is as follows. Involved in the transport of hemolysin A. This Escherichia coli protein is Hemolysin secretion protein D, chromosomal (hlyD).